A 547-amino-acid polypeptide reads, in one-letter code: Chaperonin GroEL (547 aa).

ATP contacts are provided by residues Thr30 to Pro33, Lys51, Asp87 to Thr91, Gly415, and Asp496.

The protein belongs to the chaperonin (HSP60) family. In terms of assembly, forms a cylinder of 14 subunits composed of two heptameric rings stacked back-to-back. Interacts with the co-chaperonin GroES.

Its subcellular location is the cytoplasm. It catalyses the reaction ATP + H2O + a folded polypeptide = ADP + phosphate + an unfolded polypeptide.. In terms of biological role, together with its co-chaperonin GroES, plays an essential role in assisting protein folding. The GroEL-GroES system forms a nano-cage that allows encapsulation of the non-native substrate proteins and provides a physical environment optimized to promote and accelerate protein folding. In Mannheimia succiniciproducens (strain KCTC 0769BP / MBEL55E), this protein is Chaperonin GroEL.